The sequence spans 503 residues: 5'-3' exonuclease PLD4 (503 aa).

Over 1–36 (MDKKKEHPEMRIPLQTAVEVSDWPCSTSHDPHSGLG) the chain is Cytoplasmic. Residues 37-57 (MVLGMLAVLGLSSVTLILFLW) traverse the membrane as a signal-anchor for type II membrane protein segment. Residues 58–503 (QGATSFTSHR…RQVPSQDCVW (446 aa)) are Lumenal-facing. N-linked (GlcNAc...) asparagine glycosylation is found at Asn-89, Asn-148, and Asn-169. Residues Cys-92 and Cys-248 are joined by a disulfide bond. The region spanning 207 to 234 (TGGVLHSKFWVVDGRHIYVGSANMDWRS) is the PLD phosphodiesterase 1 domain. Catalysis depends on residues His-212, Lys-214, and Asp-219. His-212 serves as the catalytic Proton donor. 4 N-linked (GlcNAc...) asparagine glycosylation sites follow: Asn-247, Asn-279, Asn-415, and Asn-425. Cys-377 and Cys-501 form a disulfide bridge. The PLD phosphodiesterase 2 domain occupies 421–447 (FSRVNHSKFMVTDKTAYVGTSNWSEDY). Residues His-426, Lys-428, and Asp-433 contribute to the active site. His-426 functions as the Nucleophile in the catalytic mechanism. Asn-442 carries N-linked (GlcNAc...) asparagine glycosylation.

This sequence belongs to the phospholipase D family. Post-translationally, highly N-glycosylated. Enriched in the white matter of early postnatal brains, as well as in splenic marginal zone cells. Highly expressed in dendritic cells (DCs) and other myeloid cells, with lower expression in B cell.

It is found in the endoplasmic reticulum membrane. The protein resides in the golgi apparatus. Its subcellular location is the trans-Golgi network membrane. The protein localises to the nucleus. It localises to the early endosome. It is found in the cytoplasmic vesicle. The protein resides in the phagosome. Its subcellular location is the lysosome. The enzyme catalyses Exonucleolytic cleavage in the 5'- to 3'-direction to yield nucleoside 3'-phosphates.. The catalysed reaction is a 5'-end 5'-dephospho-ribonucleotidyl-ribonucleotide-RNA + H2O = a ribonucleoside 3'-phosphate + a 5'-end dephospho-ribonucleoside-RNA + H(+). It carries out the reaction a ribonucleoside 3'-phosphate-2'-3'-cyclophospho-GMP + H2O = a ribonucleoside 3'-phosphate + 2',3'-cyclophospho-GMP + H(+). It catalyses the reaction a 5'-end 5'-dephospho-2'-deoxyribonucleotidyl-2'-deoxyribonucleotide in single-stranded DNA + H2O = a 5'-end dephospho-2'-deoxyribonucleoside in single-stranded DNA + a 2'-deoxyribonucleoside 3'-phosphate + H(+). The enzyme catalyses a 5'-end 5'-phospho-2'-deoxyribonucleotide in single-stranded DNA + H2O = a 5'-end 5'-dephospho-2'-deoxyribonucleotide in single-stranded DNA + phosphate. The catalysed reaction is a 3-lyso-sn-glycero-1-phospho-(3'-acyl-1'-sn-glycerol) + a 1-acyl-sn-glycerol = a 3-acyl-sn-glycero-1-phospho-(3'-acyl-1'-sn-glycerol) + glycerol. It carries out the reaction 3-lyso-sn-glycero-1-phospho-(3'-(9Z-octadecenoyl)-1'-sn-glycerol) + 1-(9Z-octadecenoyl)-sn-glycerol = 3-(9Z-octadecenoyl)-sn-glycero-1-phospho-(3'-(9Z-octadecenoyl)-1'-sn-glycerol) + glycerol. Its activity is regulated as follows. The exonuclease activity toward ssDNA substrate is Ca(2+) and Mg(2+)-independent, but it is inhibited by Fe(2+), Cu(2+) and to a lesser extent Zn(2+) ions. Functionally, 5'-&gt;3' exonuclease that hydrolyzes the phosphodiester bond of single-stranded DNA (ssDNA) and RNA molecules to form nucleoside 3'-monophosphates and 5'-end 5'-hydroxy deoxyribonucleotide/ribonucleotide fragments. Partially redundant with PLD4, can cleave all four nucleotides displaying higher efficiency for ssDNA and RNA fragments initiated with uridine and guanosine residues and lower efficiency for cytidine-initiated substrates. As a result, it does not always degrade polynucleotides to the single nucleotide level, it can stall at specific sites sparing certain fragments from exonucleolytic degradation. Processes self and pathogenic ssDNA and RNA molecules that reach the endolysosomal compartment via phagocytosis or autophagy and may serve as 'danger' signals for recognition by innate immune receptors such as toll-like receptors (TLRs). Degrades mitochondrial CpG-rich ssDNA fragments to prevent TLR9 activation and autoinflammatory response, but it can cleave viral RNA to generate ligands for TLR7 activation and initiate antiviral immune responses. In plasmacytoid dendritic cells, it cooperates with endonuclease RNASET2 to release 2',3'-cyclic guanosine monophosphate (2',3'-cGMP), a potent stimulatory ligand for TLR7. Produces 2',3'-cGMPs and cytidine-rich RNA fragments that occupy TLR7 ligand-binding pockets and trigger a signaling-competent state. Can exert polynucleotide phosphatase activity toward 5'-phosphorylated ssDNA substrates although at a slow rate. Transphosphatidylase that catalyzes the exchange with R to S stereo-inversion of the glycerol moiety between (S,R)-lysophosphatidylglycerol (LPG) and monoacylglycerol (MAG) substrates to yield (S,S)-bis(monoacylglycero)phosphate (BMP). Can synthesize a variety of (S,S)-BMPs representing the main phospholipid constituent of lysosomal intralumenal vesicle (ILV) membranes that bind acid hydrolases for lipid degradation. Regulates the homeostasis and interorganellar communication of the endolysosomal system with an overall impact on cellular removal of dysfunctional organelles via autophagy as well as proper protein and lipid turnover. May play a role in myotube formation in response to ER stress. The chain is 5'-3' exonuclease PLD4 from Mus musculus (Mouse).